The primary structure comprises 228 residues: Probable septum site-determining protein MinC (228 aa).

It belongs to the MinC family. As to quaternary structure, interacts with MinD and FtsZ.

In terms of biological role, cell division inhibitor that blocks the formation of polar Z ring septums. Rapidly oscillates between the poles of the cell to destabilize FtsZ filaments that have formed before they mature into polar Z rings. Prevents FtsZ polymerization. The polypeptide is Probable septum site-determining protein MinC (Bacillus anthracis (strain A0248)).